Here is a 164-residue protein sequence, read N- to C-terminus: S-ribosylhomocysteine lyase (164 aa).

His-54, His-58, and Cys-128 together coordinate Fe cation.

This sequence belongs to the LuxS family. Homodimer. It depends on Fe cation as a cofactor.

It catalyses the reaction S-(5-deoxy-D-ribos-5-yl)-L-homocysteine = (S)-4,5-dihydroxypentane-2,3-dione + L-homocysteine. Functionally, involved in the synthesis of autoinducer 2 (AI-2) which is secreted by bacteria and is used to communicate both the cell density and the metabolic potential of the environment. The regulation of gene expression in response to changes in cell density is called quorum sensing. Catalyzes the transformation of S-ribosylhomocysteine (RHC) to homocysteine (HC) and 4,5-dihydroxy-2,3-pentadione (DPD). This chain is S-ribosylhomocysteine lyase, found in Campylobacter jejuni subsp. jejuni serotype O:23/36 (strain 81-176).